A 666-amino-acid chain; its full sequence is Enzymatic polyprotein (666 aa).

D54 is an active-site residue. Positions 215–445 (ENPIDPIKSK…EKINFLGLEI (231 aa)) constitute a Reverse transcriptase domain.

This sequence belongs to the caulimoviridae enzymatic polyprotein family.

It carries out the reaction DNA(n) + a 2'-deoxyribonucleoside 5'-triphosphate = DNA(n+1) + diphosphate. In terms of biological role, encodes for at least two polypeptides: protease (PR) and reverse transcriptase (RT). The protease processes the polyprotein in cis. Reverse transcriptase is multifunctional enzyme that converts the viral RNA genome into dsDNA in viral cytoplasmic capsids. This enzyme displays a DNA polymerase activity that can copy either DNA or RNA templates, and a ribonuclease H (RNase H) activity that cleaves the RNA strand of RNA-DNA heteroduplexes in a partially processive 3'- to 5'-endonucleasic mode. Neo-synthesized pregenomic RNA (pgRNA) are encapsidated, and reverse-transcribed inside the nucleocapsid. Partial (+)DNA is synthesized from the (-)DNA template and generates the relaxed circular DNA (RC-DNA) genome. After budding and infection, the RC-DNA migrates in the nucleus, and is converted into a plasmid-like covalently closed circular DNA (cccDNA). The chain is Enzymatic polyprotein from Figwort mosaic virus (strain DxS) (FMV).